A 484-amino-acid chain; its full sequence is tRNA sulfurtransferase (484 aa).

Positions 63–167 (QAFGERLACI…RDNLYMVTKR (105 aa)) constitute a THUMP domain. Residues 185 to 186 (LI), Lys-267, Gly-289, and Gln-298 each bind ATP. A disulfide bridge links Cys-346 with Cys-458. The 79-residue stretch at 406–484 (IDTNQVVIDI…GYTNVKVYRP (79 aa)) folds into the Rhodanese domain. Cys-458 functions as the Cysteine persulfide intermediate in the catalytic mechanism.

The protein belongs to the ThiI family.

It is found in the cytoplasm. It catalyses the reaction [ThiI sulfur-carrier protein]-S-sulfanyl-L-cysteine + a uridine in tRNA + 2 reduced [2Fe-2S]-[ferredoxin] + ATP + H(+) = [ThiI sulfur-carrier protein]-L-cysteine + a 4-thiouridine in tRNA + 2 oxidized [2Fe-2S]-[ferredoxin] + AMP + diphosphate. The enzyme catalyses [ThiS sulfur-carrier protein]-C-terminal Gly-Gly-AMP + S-sulfanyl-L-cysteinyl-[cysteine desulfurase] + AH2 = [ThiS sulfur-carrier protein]-C-terminal-Gly-aminoethanethioate + L-cysteinyl-[cysteine desulfurase] + A + AMP + 2 H(+). It participates in cofactor biosynthesis; thiamine diphosphate biosynthesis. Functionally, catalyzes the ATP-dependent transfer of a sulfur to tRNA to produce 4-thiouridine in position 8 of tRNAs, which functions as a near-UV photosensor. Also catalyzes the transfer of sulfur to the sulfur carrier protein ThiS, forming ThiS-thiocarboxylate. This is a step in the synthesis of thiazole, in the thiamine biosynthesis pathway. The sulfur is donated as persulfide by IscS. This Shewanella baltica (strain OS155 / ATCC BAA-1091) protein is tRNA sulfurtransferase.